The following is a 234-amino-acid chain: Probable porphobilinogen deaminase (234 aa).

The protein belongs to the HMBS family.

It carries out the reaction 4 porphobilinogen + H2O = hydroxymethylbilane + 4 NH4(+). Its pathway is porphyrin-containing compound metabolism; protoporphyrin-IX biosynthesis; coproporphyrinogen-III from 5-aminolevulinate: step 2/4. In terms of biological role, tetrapolymerization of the monopyrrole PBG into the hydroxymethylbilane pre-uroporphyrinogen in several discrete steps. This Chlamydia pneumoniae (Chlamydophila pneumoniae) protein is Probable porphobilinogen deaminase (hemC).